The following is a 141-amino-acid chain: uncharacterized protein (141 aa).

Transmembrane regions (helical) follow at residues 7–27 (FWAL…KVGV), 34–54 (FATL…VAAT), 69–89 (LFLA…FRAL), 97–117 (VAPL…LFLG), and 121–141 (NLMN…LAVF). The EamA domain maps to 14–140 (AFAALTAVFA…IAAGALLLAV (127 aa)).

It belongs to the EamA transporter family.

The protein localises to the cell membrane. This is an uncharacterized protein from Sinorhizobium sp.